The following is a 442-amino-acid chain: tRNA modification GTPase MnmE (442 aa).

Residues Arg22, Glu79, and Lys119 each coordinate (6S)-5-formyl-5,6,7,8-tetrahydrofolate. The TrmE-type G domain occupies 216–366; the sequence is GIKTCLVGAP…LLEKIKSIFA (151 aa). Asn226 is a K(+) binding site. Residues 226–231, 245–251, and 270–273 contribute to the GTP site; these read NSGKSS, SEIPGTT, and DTAG. Ser230 provides a ligand contact to Mg(2+). Ser245, Ile247, and Thr250 together coordinate K(+). Residue Thr251 participates in Mg(2+) binding. A (6S)-5-formyl-5,6,7,8-tetrahydrofolate-binding site is contributed by Lys442.

It belongs to the TRAFAC class TrmE-Era-EngA-EngB-Septin-like GTPase superfamily. TrmE GTPase family. In terms of assembly, homodimer. Heterotetramer of two MnmE and two MnmG subunits. Requires K(+) as cofactor.

The protein resides in the cytoplasm. In terms of biological role, exhibits a very high intrinsic GTPase hydrolysis rate. Involved in the addition of a carboxymethylaminomethyl (cmnm) group at the wobble position (U34) of certain tRNAs, forming tRNA-cmnm(5)s(2)U34. The sequence is that of tRNA modification GTPase MnmE from Mesomycoplasma hyopneumoniae (strain 7448) (Mycoplasma hyopneumoniae).